The sequence spans 299 residues: Glycine--tRNA ligase alpha subunit (299 aa).

Belongs to the class-II aminoacyl-tRNA synthetase family. In terms of assembly, tetramer of two alpha and two beta subunits.

It is found in the cytoplasm. The enzyme catalyses tRNA(Gly) + glycine + ATP = glycyl-tRNA(Gly) + AMP + diphosphate. The polypeptide is Glycine--tRNA ligase alpha subunit (Desulforapulum autotrophicum (strain ATCC 43914 / DSM 3382 / VKM B-1955 / HRM2) (Desulfobacterium autotrophicum)).